We begin with the raw amino-acid sequence, 311 residues long: tRNA dimethylallyltransferase (311 aa).

An ATP-binding site is contributed by 9–16; sequence GPTAVGKT. Substrate is bound at residue 11–16; sequence TAVGKT. The tract at residues 34 to 37 is interaction with substrate tRNA; the sequence is DSMQ.

This sequence belongs to the IPP transferase family. As to quaternary structure, monomer. The cofactor is Mg(2+).

It catalyses the reaction adenosine(37) in tRNA + dimethylallyl diphosphate = N(6)-dimethylallyladenosine(37) in tRNA + diphosphate. In terms of biological role, catalyzes the transfer of a dimethylallyl group onto the adenine at position 37 in tRNAs that read codons beginning with uridine, leading to the formation of N6-(dimethylallyl)adenosine (i(6)A). This is tRNA dimethylallyltransferase from Clostridium botulinum (strain Loch Maree / Type A3).